We begin with the raw amino-acid sequence, 845 residues long: Protein kintoun (845 aa).

Residues 362 to 382 (SKEQAQMHETLRHFSREDSGV) are compositionally biased toward basic and acidic residues. 3 disordered regions span residues 362 to 420 (SKEQ…PVRH), 575 to 691 (QALK…SMSD), and 773 to 845 (AQHR…EMDD). Ser-380 is modified (phosphoserine). Positions 391–400 (PVEEDPDGEL) are enriched in acidic residues. Residues 584–593 (GTKEEEKENQ) are compositionally biased toward basic and acidic residues. The span at 611–622 (KPGKKQRKRNKK) shows a compositional bias: basic residues. Positions 640–671 (LTKNSELQPKSTFNLPQRKQRSYSECNDSTGG) are enriched in polar residues. Ser-779 is subject to Phosphoserine. A compositionally biased stretch (polar residues) spans 794–804 (LKQQENQSRNC).

Belongs to the PIH1 family. Kintoun subfamily. As to quaternary structure, interacts with Pp1alpha-96A, Pp1-87B, Pp1-13C and flw.

It localises to the cytoplasm. Required for cytoplasmic pre-assembly of axonemal dyneins, thereby playing a central role in motility in cilia and flagella. Involved in pre-assembly of dynein arm complexes in the cytoplasm before intraflagellar transport loads them for the ciliary compartment. The protein is Protein kintoun of Drosophila erecta (Fruit fly).